Consider the following 484-residue polypeptide: Glycogen synthase (484 aa).

ADP-alpha-D-glucose is bound at residue lysine 15.

The protein belongs to the glycosyltransferase 1 family. Bacterial/plant glycogen synthase subfamily.

The catalysed reaction is [(1-&gt;4)-alpha-D-glucosyl](n) + ADP-alpha-D-glucose = [(1-&gt;4)-alpha-D-glucosyl](n+1) + ADP + H(+). It participates in glycan biosynthesis; glycogen biosynthesis. In terms of biological role, synthesizes alpha-1,4-glucan chains using ADP-glucose. This chain is Glycogen synthase, found in Bacillus licheniformis (strain ATCC 14580 / DSM 13 / JCM 2505 / CCUG 7422 / NBRC 12200 / NCIMB 9375 / NCTC 10341 / NRRL NRS-1264 / Gibson 46).